A 287-amino-acid polypeptide reads, in one-letter code: U1 small nuclear ribonucleoprotein A (287 aa).

The region spanning 16 to 95 (HTIYINNLNE…KPMRIQYAKT (80 aa)) is the RRM 1 domain. Lysine 66 carries the N6-acetyllysine modification. Residues 106–134 (TYVERDRKREKRKPKSQETPAAKKAVQGG) are disordered. Low complexity predominate over residues 125–134 (PAAKKAVQGG). Position 157 is an omega-N-methylarginine (arginine 157). The RRM 2 domain maps to 213-287 (HILFLTNLPE…NAMKISFAKK (75 aa)).

The protein belongs to the RRM U1 A/B'' family. U1 snRNP is composed of the 7 core Sm proteins SNRPB, SNRPD1, SNRPD2, SNRPD3, SNRPE, SNRPF and SNRPG that assemble in a heptameric protein ring on the Sm site of the small nuclear RNA to form the core snRNP, and at least three U1 snRNP-specific proteins SNRNP70/U1-70K, SNRPA/U1-A and SNRPC/U1-C. Interacts with SFPQ; component of a snRNP-free complex with SFPQ. Interacts with IVNS1ABP (via BACK domain); the interaction is indirect.

It localises to the nucleus. Component of the spliceosomal U1 snRNP, which is essential for recognition of the pre-mRNA 5' splice-site and the subsequent assembly of the spliceosome. U1 snRNP is the first snRNP to interact with pre-mRNA. This interaction is required for the subsequent binding of U2 snRNP and the U4/U6/U5 tri-snRNP. SNRPA binds stem loop II of U1 snRNA. In a snRNP-free form (SF-A) may be involved in coupled pre-mRNA splicing and polyadenylation process. May bind preferentially to the 5'-UGCAC-3' motif on RNAs. The protein is U1 small nuclear ribonucleoprotein A (Snrpa) of Mus musculus (Mouse).